Consider the following 183-residue polypeptide: Ribose 1,5-bisphosphate phosphokinase PhnN (183 aa).

6–13 is a binding site for ATP; it reads GPSGAGKD.

The protein belongs to the ribose 1,5-bisphosphokinase family.

It catalyses the reaction alpha-D-ribose 1,5-bisphosphate + ATP = 5-phospho-alpha-D-ribose 1-diphosphate + ADP. It participates in metabolic intermediate biosynthesis; 5-phospho-alpha-D-ribose 1-diphosphate biosynthesis; 5-phospho-alpha-D-ribose 1-diphosphate from D-ribose 5-phosphate (route II): step 3/3. Catalyzes the phosphorylation of ribose 1,5-bisphosphate to 5-phospho-D-ribosyl alpha-1-diphosphate (PRPP). This is Ribose 1,5-bisphosphate phosphokinase PhnN from Agrobacterium fabrum (strain C58 / ATCC 33970) (Agrobacterium tumefaciens (strain C58)).